Reading from the N-terminus, the 156-residue chain is Small ribosomal subunit protein uS7 (156 aa).

Belongs to the universal ribosomal protein uS7 family. In terms of assembly, part of the 30S ribosomal subunit. Contacts proteins S9 and S11.

Its function is as follows. One of the primary rRNA binding proteins, it binds directly to 16S rRNA where it nucleates assembly of the head domain of the 30S subunit. Is located at the subunit interface close to the decoding center, probably blocks exit of the E-site tRNA. The polypeptide is Small ribosomal subunit protein uS7 (Microcystis aeruginosa (strain NIES-843 / IAM M-2473)).